A 205-amino-acid chain; its full sequence is Probable thymidylate kinase (205 aa).

Residue 7–14 (GIDGAGKS) coordinates ATP.

The protein belongs to the thymidylate kinase family.

It carries out the reaction dTMP + ATP = dTDP + ADP. The polypeptide is Probable thymidylate kinase (Thermococcus kodakarensis (strain ATCC BAA-918 / JCM 12380 / KOD1) (Pyrococcus kodakaraensis (strain KOD1))).